The sequence spans 114 residues: Beta-microseminoprotein E1 (114 aa).

An N-terminal signal peptide occupies residues 1–20 (MNVLLGGLVIFATFVTLCNG). 5 disulfide bridges follow: Cys22–Cys70, Cys38–Cys62, Cys57–Cys93, Cys60–Cys69, and Cys84–Cys107.

The protein belongs to the beta-microseminoprotein family.

It is found in the secreted. In Saguinus oedipus (Cotton-top tamarin), this protein is Beta-microseminoprotein E1 (MSPE).